The chain runs to 396 residues: Elongation factor Tu (396 aa).

The tr-type G domain occupies 10 to 205; the sequence is KPHVNIGTIG…AVDESIPDPV (196 aa). The G1 stretch occupies residues 19–26; that stretch reads GHVDHGKT. 19–26 is a binding site for GTP; it reads GHVDHGKT. A Mg(2+)-binding site is contributed by threonine 26. The interval 62–66 is G2; it reads GITIN. A G3 region spans residues 83 to 86; the sequence is DAPG. GTP contacts are provided by residues 83–87 and 138–141; these read DAPGH and NKAD. The tract at residues 138-141 is G4; that stretch reads NKAD. The interval 175–177 is G5; the sequence is SAL.

Belongs to the TRAFAC class translation factor GTPase superfamily. Classic translation factor GTPase family. EF-Tu/EF-1A subfamily. In terms of assembly, monomer.

The protein localises to the cytoplasm. The catalysed reaction is GTP + H2O = GDP + phosphate + H(+). Its function is as follows. GTP hydrolase that promotes the GTP-dependent binding of aminoacyl-tRNA to the A-site of ribosomes during protein biosynthesis. The protein is Elongation factor Tu of Mycobacterium avium (strain 104).